Here is a 396-residue protein sequence, read N- to C-terminus: Lipid-A-disaccharide synthase (396 aa).

This sequence belongs to the LpxB family.

The catalysed reaction is a lipid X + a UDP-2-N,3-O-bis[(3R)-3-hydroxyacyl]-alpha-D-glucosamine = a lipid A disaccharide + UDP + H(+). Its pathway is bacterial outer membrane biogenesis; LPS lipid A biosynthesis. Functionally, condensation of UDP-2,3-diacylglucosamine and 2,3-diacylglucosamine-1-phosphate to form lipid A disaccharide, a precursor of lipid A, a phosphorylated glycolipid that anchors the lipopolysaccharide to the outer membrane of the cell. This is Lipid-A-disaccharide synthase from Hahella chejuensis (strain KCTC 2396).